Here is a 172-residue protein sequence, read N- to C-terminus: Epithelial membrane protein 2 (172 aa).

Transmembrane regions (helical) follow at residues 1-21 (MLVILAFIIVFHIVSTALLFI), 72-92 (TMILSTILSCISFLIFLLQLF), 100-120 (FVLTAIIQLMSCLCVMIGASV), and 148-168 (FILAWVAFAFTFISGLMYMIL).

Belongs to the PMP-22/EMP/MP20 family. In terms of assembly, interacts with PTK2; regulates PTK2 activation and localization. Interacts with ITGB3; regulates the levels of the heterodimer ITGA5-ITGB3 integrin surface expression. Interacts with P2RX7 (via C-terminus). Interacts with ITGB1; the interaction may be direct or indirect and ITGB1 has a heterodimer form. As to expression, expressed in glomeruli.

It is found in the golgi apparatus membrane. The protein localises to the cell membrane. It localises to the apical cell membrane. The protein resides in the membrane raft. Its subcellular location is the cytoplasm. It is found in the nucleus. The protein localises to the perinuclear region. Its function is as follows. Functions as a key regulator of cell membrane composition by regulating protein surface expression. Also, plays a role in regulation of processes including cell migration, cell proliferation, cell contraction and cell adhesion. Regulates transepithelial migration of neutrophils into the alveolar lumen, potentially via mediation of cell surface expression of adhesion markers and lipid raft formation. Negatively regulates caveolae formation by reducing CAV1 expression and CAV1 amount by increasing lysosomal degradation. Facilitates surface trafficking and the formation of lipid rafts bearing GPI-anchor proteins. Regulates surface expression of MHC1 and ICAM1 proteins increasing susceptibility to T-cell mediated cytotoxicity. Regulates the plasma membrane expression of the integrin heterodimers ITGA6-ITGB1, ITGA5-ITGB3 and ITGA5-ITGB1 resulting in modulation of cell-matrix adhesion. Also regulates many processes through PTK2. Regulates blood vessel endothelial cell migration and angiogenesis by regulating VEGF protein expression through PTK2 activation. Regulates cell migration and cell contraction through PTK2 and SRC activation. Regulates focal adhesion density, F-actin conformation and cell adhesion capacity through interaction with PTK2. Positively regulates cell proliferation. Plays a role during cell death and cell blebbing. Promotes angiogenesis and vasculogenesis through induction of VEGFA via a HIF1A-dependent pathway. Also plays a role in embryo implantation by regulating surface trafficking of integrin heterodimer ITGA5-ITGB3. Plays a role in placental angiogenesis and uterine natural killer cell regulation at the maternal-fetal placental interface, however not required in the maternal tissues for a viable pregnancy. Involved in the early stages of embryogenic development and cardiogenesis, potentially via regulation of epithelial-mesenchymal transition timing. May play a role in glomerular filtration. The sequence is that of Epithelial membrane protein 2 (Emp2) from Rattus norvegicus (Rat).